The chain runs to 100 residues: Urease subunit gamma (100 aa).

The protein belongs to the urease gamma subunit family. As to quaternary structure, heterotrimer of UreA (gamma), UreB (beta) and UreC (alpha) subunits. Three heterotrimers associate to form the active enzyme.

Its subcellular location is the cytoplasm. The catalysed reaction is urea + 2 H2O + H(+) = hydrogencarbonate + 2 NH4(+). Its pathway is nitrogen metabolism; urea degradation; CO(2) and NH(3) from urea (urease route): step 1/1. This is Urease subunit gamma from Mycobacterium bovis (strain ATCC BAA-935 / AF2122/97).